Consider the following 119-residue polypeptide: Large ribosomal subunit protein uL18 (119 aa).

The protein belongs to the universal ribosomal protein uL18 family. In terms of assembly, part of the 50S ribosomal subunit; part of the 5S rRNA/L5/L18/L25 subcomplex. Contacts the 5S and 23S rRNAs.

Functionally, this is one of the proteins that bind and probably mediate the attachment of the 5S RNA into the large ribosomal subunit, where it forms part of the central protuberance. The protein is Large ribosomal subunit protein uL18 of Tropheryma whipplei (strain TW08/27) (Whipple's bacillus).